We begin with the raw amino-acid sequence, 376 residues long: Putative F-box/FBD/LRR-repeat protein At5g52460 (376 aa).

An F-box domain is found at 16–75; the sequence is RDEISSLPDDLLIQILLLVPIKDAVGTMILSKRWRYVWTLLPKLEYSDPGDECESVWKFL. LRR repeat units lie at residues 131 to 154 and 199 to 224; these read CKTL…VCLP and FAKV…KFLK. One can recognise an FBD domain in the interval 296–348; that stretch reads CHGTNQGTVPRCLSAHLDEEFVWHGYRGNEEETQLIRYIFANAKCLKKREIST.

This Arabidopsis thaliana (Mouse-ear cress) protein is Putative F-box/FBD/LRR-repeat protein At5g52460 (EDA41).